The chain runs to 410 residues: MNNGINVNSEIGKLKSVLLHRPGAEVENITPDTMKQLLFDDIPYLKIAQKEHDFFAQTLRDNGAETVYIENLATEVFEKSSETKEEFLSHLLHEAGYRPGRTYDGLTEYLTSMSTKDMVEKIYAGVRKNELDIKRTALSDMAGSDAENYFYLNPLPNAYFTRDPQASMGVGMTINKMTFPARQPESLITEYVMANHPRFKDTPIWRDRNHTTRIEGGDELILNKTTVAIGVSERTSSKTIQNLAKELFANPLSTFDTVLAVEIPHNHAMMHLDTVFTMINHDQFTVFPGIMDGAGNINVFILRPGKDDEVEIEHLTDLKAALKKVLNLSELDLIECGAGDPIAAPREQWNDGSNTLAIAPGEIVTYDRNYVTVELLKEHGIKVHEILSSELGRGRGGARCMSQPLWREDL.

The active-site Amidino-cysteine intermediate is the Cys-400.

It belongs to the arginine deiminase family.

It localises to the cytoplasm. The enzyme catalyses L-arginine + H2O = L-citrulline + NH4(+). It participates in amino-acid degradation; L-arginine degradation via ADI pathway; carbamoyl phosphate from L-arginine: step 1/2. This is Arginine deiminase (arcA) from Lactococcus lactis subsp. lactis (strain IL1403) (Streptococcus lactis).